Consider the following 69-residue polypeptide: Large ribosomal subunit protein uL30 (69 aa).

It belongs to the universal ribosomal protein uL30 family. In terms of assembly, part of the 50S ribosomal subunit.

This is Large ribosomal subunit protein uL30 from Rhizobium etli (strain CIAT 652).